Reading from the N-terminus, the 2533-residue chain is MAGEYSTAPMAIIGMACRFSGGATSPEKLWDMIVQRRSGWSEIPTSRFNANGLYHPNGERVGTTHVKGGHFLEDDIACFDAAFFGMASETASAMDPQYRMELEVVYEALESAGIPMESIKGTNTSVYGGVMFRDYHDTHSRDLDTLPRYFMTGNAATMASNRISHFYDLRGPSMTVDTGCSTSLTALHLACQNLRSGESNMSIVTGASLMINPDVFLSMSNIGFLSPDGISYAFDSRANGYGRGEGVGALLVKRLDDALRDGDSIRAIIRETGVNQNGKTPSITAPQQAAQEALIRQCYERVNLDPAQTTYVEAHGTGTPAGDPLEVGALAAALGGSRSAEHPLYLGSIKANIGHTEAASGVASIIKVALALEKGQIPPNTQLNTPNSELRLNDRNMEVPVSTQRWPVGKGPRRASVNNFGFGGSNAHAILESPPVENGANRTNGQLKSNGPVVNGNKTNITKRETPWVFRLSAKDAQTCQQMAADLSTYIESHPPVDEEAFLGRLAYTLGSRRSVFSWTAAVSARSLAELTRALDDDERLVPSRAAPSLRLGWVFTGQGAQWYAMGRELIATYPVFRSTILECDRYMTEMGSTWTLMEELHREESTSQVNNIVYSLGLATAIQIALVELLWSWGIHPTAVTGHSSGEIAAAYASKALDMKSAIGIAYLRGVLAEKFDDKILGKGGMMAVGLGRKPVEHYLSRVTAGYCVVACVNSQYSVTISGDIPAIDQLEQLLQEDQVFARRLRVNGAFHCEQMRPMADLFDWSLRYLLTPHPDFGSVLFSSPKTGSRIQDGTILATSSHWVGNMLQAVEFESSFRHMCFGDPSPKGAKGTQDVDLVLEIGPHGALGGPIQQLMTLPEFEGSGISYLPTLVRKQDAVFAMQRLAIDLTHRGYPVDLNAVNFPHGTLSLSILHDLPSYPWNHSTRYWLEPRRNRADRQRQAPPSDLVGYSQPSITPLARTWRHIIRLSDLPWLGDHRVQSSIVFPGAGLVSMAIEGMRQVAAGRQQTVSAYELRDVDIAKALTVPEADEGVEVQLNIRPCDEQMLGTKDWLAFQIFSVSGDSRWTEHCSGRISVITTSDSTPLPSAIPSQSEDLYNRRIDPRYMWAAMRSVGIYHGPLFQNIHQVLAKPSASRTIFAIADTAAVMPKKYQTPHVLHPTTLDSVFQAAYTLLPESGARLPSAMVPRHIRSVRVSAQISNSPAHELEAYATLNRDYDAQSFETSLTVVDAKDGNSPVLEVDGLTCQSLGRALDREADPHENEICSRWEWAPDIGTLDAAACKDRIRCAPEAAEIETMRDLRRATILYILDIVSSLTVADVQQLRGHLKKFYVWMVEQLKKASRNQFAPDSAQWRDISAADKAALYEKVGRTSVNGEMLCRLGPLGASFLRQEMAPLEVMLENRLLFRYYLEALKWDRSTRQVSELVRLCTHKNPRAKILEIGAGTGGGTQVILEALGKENGSSTGARFGRYDFTDISAGFFEAAKERFQDWADLMNFQKLDIEHDPVAQGFEEGSYDVVIACQVLHATKSMDRTLTHVRKLLKPGGKLILMETTRDELDVFFAFGLLPGWWLSEEEERRTTPSLTLPFWNQVLSRNGFAGLDLEVHDCDSEEFYAFSTILSTAQAPALSITSPVTIVTGTSPPPTSWMSELQTAVAAHIGCQPVIATLETVTPQGNICIFLGEADEPLLDHVSNPVEFDRIIHLATRCKGLLWITRGGSLDVDKPAMSLSQGLLRTLKSEYQGKSFVSLDVDPRRSPWTAEVVQAISQIFPASFSETTDPATCEFEYAERDGVLHIPRTVKDIPMNRNIFPESDTTEKTIHCRFRDAARPLRMKIGTPGLIDTLVFHDDLDAKSDPLPADWIEFDPTAFGLNFRDVMVAMGQLEANAIMGFECAGTIVRLGATAAAKGFAVGDRVCTLLRGHWATRPRAPWTSVMRIPQHLSDQEAASFPTVFATAYIALHETARLQRGESILIHAATGGVGQAAIQLAQLIGAEIYATASTPAKRQLLHETYGIPENNIFSSRDPSFATDVHLRTDGRGVDVVLNSLAGRLLQESFNCLAEFGRMVEIGKRDLEQHSGLDMYPFTRNVSFSSVDLLTWQSRRGADISCVLQSLSKLLGEKKIMPVYPLTLYPITQIEKAFRTMQTGQHMGKIIISVGEQDTVPVVERPPPFSLRSDASYVIVGGLGGIGRVLCEWMMARGARHLIIISRNARPGPFVTELEQQGCEVRTLACDIAAEDQLAAALAQCADMPPIKGVIQGAMVLKDTVLEQMTVGDFEAAVRPKAQGSWNLHQQLGDVDFFIMLSSLMGVMGAASQANYAAGGAFQDALATYRRNRGLPAVSLDLGIVRSVGFVAQTDGVQERLVQMGVTSLSEETVLRILEQAITHPTGPPQIITGINTAPGKHWDEASWIQDPRFAALRYRDSTQAGSSRATTGTAKQGKIRDQLAEIASPVDAAALICQELMQKLASMFGLVVEEMSATQDLSSYGVDSLVAVELRNWLVAQVGAEVSIFDLMQSPSLEDLSLRVATKRT.

The Ketosynthase family 3 (KS3) domain occupies 7 to 433 (TAPMAIIGMA…GSNAHAILES (427 aa)). Residues Cys180, His315, and His355 each act as for beta-ketoacyl synthase activity in the active site. The tract at residues 554–821 (WVFTGQGAQW…VEFESSFRHM (268 aa)) is malonyl-CoA:ACP transacylase (MAT) domain. The tract at residues 946–1081 (SDLVGYSQPS…GRISVITTSD (136 aa)) is N-terminal hotdog fold. One can recognise a PKS/mFAS DH domain in the interval 946–1254 (SDLVGYSQPS…CQSLGRALDR (309 aa)). A dehydratase (DH) domain region spans residues 947–1251 (DLVGYSQPSI…GLTCQSLGRA (305 aa)). Residue His978 is the Proton acceptor; for dehydratase activity of the active site. The segment at 1097–1254 (YNRRIDPRYM…CQSLGRALDR (158 aa)) is C-terminal hotdog fold. Residue Asp1163 is the Proton donor; for dehydratase activity of the active site. The methyltransferase (CMet) domain stretch occupies residues 1419–1554 (TRQVSELVRL…GGKLILMETT (136 aa)). An enoyl reductase (ER) domain region spans residues 1839 to 2155 (GLIDTLVFHD…TGQHMGKIII (317 aa)). The ketoreductase (KR) domain stretch occupies residues 2178–2349 (ASYVIVGGLG…AVSLDLGIVR (172 aa)). The Carrier domain maps to 2455–2532 (DAAALICQEL…DLSLRVATKR (78 aa)). The residue at position 2492 (Ser2492) is an O-(pantetheine 4'-phosphoryl)serine.

It participates in secondary metabolite biosynthesis. Highly reducing polyketide synthase; part of the gene cluster that mediates the biosynthesis of azaphilones, a class of fungal metabolites characterized by a highly oxygenated pyrano-quinone bicyclic core and exhibiting a broad range of bioactivities. In the first step, the non-reducing polyketide synthase azaA forms the hexaketide precursor from successive condensations of five malonyl-CoA units, presumably with a simple acetyl-CoA starter unit. The reactive polyketide chain then undergoes a PT-mediated C2-C7 cyclization to afford the aromatic ring and is eventually released as an aldehyde through the R-domain. The putative ketoreductase azaE is proposed to catalyze the reduction of the terminal ketone resulting in the early culture product FK17-P2a. The monooxygenase azaH was demonstrated to be the only enzyme required to convert FK17-P2a to azanigerone E. AzaH first hydroxylates the benzaldehyde intermediate FK17-P2a at C4, which triggers the formation of the pyran-ring to afford azanigerone E. In parallel, the 2,4-dimethylhexanoyl chain is synthesized by the HR-PKS azaB and is proposed to be transferred to the C4-hydroxyl of azanigerone E by the acyltransferase azaD directly from the ACP domain of azaB. Alternatively, the 2,4-dimethyl-hexanoyl chain may be offloaded from the HR-PKS as a carboxylic acid and converted to an acyl-CoA by azaF. The resulting acyl-CoA molecule could then be taken up as a substrate by AzaD to form azanigerone B. To yield the carboxylic acid substituent in azanigerone A, the hydroxypropyl side chain of azanigerone B would need to undergo a C-C oxidative cleavage catalyzed by cytochrome P450 AzaI. AzaI is proposed to act on a vicinal diol that leads to a C-C bond scission either through an alkoxyradical intermediate or a peroxy complex. In the biosynthesis of azanigerone A, azanigerone B first undergoes hydroxylation at C10, possibly catalyzed by one of the two FAD-dependent monooxygenases encoded in the cluster, azaG or azaL, resulting in the vicinal diol azanigerone C. Oxidative cleavage of azanigerone C by azaI would yield the corresponding aldehyde derivative of azanigerone A. Finally, the dehydrogenase azaJ is proposed to convert the aldehyde functional group into the carboxylic acid, completing the conversion from azanigerone B to azanigerone A. Alternatively, the oxidation of aldehyde to carboxylic acid may be catalyzed by the same P450 enzyme azaI via consecutive oxidation or by endogenous alcohol dehydrogenase. This chain is Highly reducing polyketide synthase azaB, found in Aspergillus niger (strain ATCC 1015 / CBS 113.46 / FGSC A1144 / LSHB Ac4 / NCTC 3858a / NRRL 328 / USDA 3528.7).